The following is a 77-amino-acid chain: Large ribosomal subunit protein bL31 (77 aa).

Zn(2+)-binding residues include C16, C18, C37, and C40.

It belongs to the bacterial ribosomal protein bL31 family. Type A subfamily. Part of the 50S ribosomal subunit. Zn(2+) serves as cofactor.

Functionally, binds the 23S rRNA. The chain is Large ribosomal subunit protein bL31 from Pseudomonas fluorescens (strain SBW25).